We begin with the raw amino-acid sequence, 123 residues long: Small ribosomal subunit protein uS12 (123 aa).

Asp89 is modified (3-methylthioaspartic acid). The disordered stretch occupies residues 101 to 123 (TLDTQGVKDRRQRRSKYGAKRPK). Residues 110 to 123 (RRQRRSKYGAKRPK) show a composition bias toward basic residues.

The protein belongs to the universal ribosomal protein uS12 family. Part of the 30S ribosomal subunit. Contacts proteins S8 and S17. May interact with IF1 in the 30S initiation complex.

With S4 and S5 plays an important role in translational accuracy. Functionally, interacts with and stabilizes bases of the 16S rRNA that are involved in tRNA selection in the A site and with the mRNA backbone. Located at the interface of the 30S and 50S subunits, it traverses the body of the 30S subunit contacting proteins on the other side and probably holding the rRNA structure together. The combined cluster of proteins S8, S12 and S17 appears to hold together the shoulder and platform of the 30S subunit. This chain is Small ribosomal subunit protein uS12, found in Paramagnetospirillum magneticum (strain ATCC 700264 / AMB-1) (Magnetospirillum magneticum).